The sequence spans 276 residues: ADP-dependent (S)-NAD(P)H-hydrate dehydratase (276 aa).

The 268-residue stretch at 7 to 274 (METLNSINIP…NEIPYAMKQL (268 aa)) folds into the YjeF C-terminal domain. Ala-42, Gly-105, and His-154 together coordinate (6S)-NADPHX. Gly-216 lines the AMP pocket. Asp-217 is a binding site for (6S)-NADPHX.

Belongs to the NnrD/CARKD family. In terms of assembly, homotetramer. It depends on Mg(2+) as a cofactor.

The enzyme catalyses (6S)-NADHX + ADP = AMP + phosphate + NADH + H(+). It catalyses the reaction (6S)-NADPHX + ADP = AMP + phosphate + NADPH + H(+). In terms of biological role, catalyzes the dehydration of the S-form of NAD(P)HX at the expense of ADP, which is converted to AMP. Together with NAD(P)HX epimerase, which catalyzes the epimerization of the S- and R-forms, the enzyme allows the repair of both epimers of NAD(P)HX, a damaged form of NAD(P)H that is a result of enzymatic or heat-dependent hydration. The sequence is that of ADP-dependent (S)-NAD(P)H-hydrate dehydratase from Staphylococcus aureus (strain NCTC 8325 / PS 47).